Reading from the N-terminus, the 129-residue chain is MSTIPADLKYASSHEWIRKESDGSYTVGITEHAQELLGDMVFVELPEVGDTVTAGEDCAVAESVKAASDIYAPISGEVIAVNESLEDSPELVNSDAFGDGWFFRVMPSDESEVDALLDADGYQEVIDEE.

Residues 24-106 (SYTVGITEHA…FGDGWFFRVM (83 aa)) form the Lipoyl-binding domain. An N6-lipoyllysine modification is found at lysine 65.

This sequence belongs to the GcvH family. The glycine cleavage system is composed of four proteins: P, T, L and H. Requires (R)-lipoate as cofactor.

The glycine cleavage system catalyzes the degradation of glycine. The H protein shuttles the methylamine group of glycine from the P protein to the T protein. The chain is Glycine cleavage system H protein from Shewanella frigidimarina (strain NCIMB 400).